The following is a 656-amino-acid chain: Acyl-CoA-binding domain-containing protein 6 (656 aa).

In terms of domain architecture, ACB spans 8 to 102; the sequence is YPDRFYAAAA…LEEEDPGWYS (95 aa). An acyl-CoA contacts are provided by residues 44–48 and K70; that span reads YGLYQ. The segment at 129-148 is disordered; it reads ASTNGTSVPEPKTISENGSS. Kelch repeat units lie at residues 194–241, 254–304, 305–354, 356–405, 406–454, and 461–507; these read KMYI…AQVS, KFFS…LVGT, TLVL…CHAD, YLLI…TVGE, NWYI…LVHS, and YLIS…EPEV. A coiled-coil region spans residues 527–636; the sequence is LKKDDANELL…EQAALEAKQR (110 aa). The tract at residues 627 to 656 is disordered; that stretch reads EQAALEAKQRQSSSGMWGWLVGTPPDKSES.

Belongs to the ACBP family. In terms of tissue distribution, highly expressed in leaves. Expressed in roots and seeds.

Its subcellular location is the peroxisome. Functionally, binds medium- and long-chain acyl-CoA esters with high affinity. Can interact in vitro with linoleoyl-CoA and linolenoyl-CoA. Binds phosphatidic acid (PA) and phosphatidylcholine (PC) in vitro. May play a role in the biosynthesis of phospholipids. May be involved in lipid degradation via peroxisomal beta-oxydation. In Oryza sativa subsp. japonica (Rice), this protein is Acyl-CoA-binding domain-containing protein 6.